The sequence spans 601 residues: Adenine deaminase (601 aa).

The protein belongs to the metallo-dependent hydrolases superfamily. Adenine deaminase family. Requires Mn(2+) as cofactor.

It carries out the reaction adenine + H2O + H(+) = hypoxanthine + NH4(+). This is Adenine deaminase from Ruegeria sp. (strain TM1040) (Silicibacter sp.).